Reading from the N-terminus, the 186-residue chain is Putative transcriptional regulator encoded by LINC00473 (186 aa).

The disordered stretch occupies residues 1–62 (MELSAAAGRR…RDCTPTCTNA (62 aa)). The span at 18–40 (FTGRHRTERSQERGSTPRKERSM) shows a compositional bias: basic and acidic residues.

Its function is as follows. May play a role in cAMP-mediated gene transcription. In Homo sapiens (Human), this protein is Putative transcriptional regulator encoded by LINC00473 (LINC00473).